Consider the following 419-residue polypeptide: Epothilone C/D epoxidase (419 aa).

2 residues coordinate substrate: alanine 180 and glycine 304. Cysteine 365 provides a ligand contact to heme.

It belongs to the cytochrome P450 family. Heme serves as cofactor.

It carries out the reaction epothilone C + 2 reduced [2Fe-2S]-[ferredoxin] + O2 + 2 H(+) = epothilone A + 2 oxidized [2Fe-2S]-[ferredoxin] + H2O. The enzyme catalyses epothilone D + 2 reduced [2Fe-2S]-[ferredoxin] + O2 + 2 H(+) = epothilone B + 2 oxidized [2Fe-2S]-[ferredoxin] + H2O. It functions in the pathway secondary metabolite biosynthesis; epothilone biosynthesis. Its function is as follows. Involved in the biosynthesis of epothilones, macrolactones which have a narrow anti-fungal spectrum and microtubule-stabilizing activity. Catalyzes the epoxidation of epothilones C and D to epothilones A and B, respectively. The polypeptide is Epothilone C/D epoxidase (cyp167A1) (Sorangium cellulosum (Polyangium cellulosum)).